The following is a 189-amino-acid chain: Transcriptional repressor NrdR (189 aa).

A zinc finger spans residues 3–34; the sequence is CPFCRGDDSRVVDSREVEDGQAIRRRRSCSGC. The ATP-cone domain maps to 46–136; it reads LSVVKRSGVT…VYRAFSSVED (91 aa). The disordered stretch occupies residues 152-189; it reads RLPEGPEAAQGGPESKAGNGQAAGSGDPEGVKAEKSSE. Residues 180–189 are compositionally biased toward basic and acidic residues; sequence EGVKAEKSSE.

Belongs to the NrdR family. Zn(2+) is required as a cofactor.

Negatively regulates transcription of bacterial ribonucleotide reductase nrd genes and operons by binding to NrdR-boxes. The protein is Transcriptional repressor NrdR of Saccharopolyspora erythraea (strain ATCC 11635 / DSM 40517 / JCM 4748 / NBRC 13426 / NCIMB 8594 / NRRL 2338).